We begin with the raw amino-acid sequence, 202 residues long: MPPMTRNTRNNPNGRFPGAFAPEDEDDLPKSKSQRKRDMTALQDIGAELESLPKDRLARVPMPEALADAIHAARKITSHEGKRRQMQFVGKVMRGLDDDEIATIRAALEGFKGTSKAETARMHLIERWRELLLADDDALTKFLGEHPSVDVQSVRNIIRNARKEKELAKPPKYFRELFQAIKTALEAKDADAAPDNAPEPEA.

The span at 1–13 (MPPMTRNTRNNPN) shows a compositional bias: low complexity. Residues 1–39 (MPPMTRNTRNNPNGRFPGAFAPEDEDDLPKSKSQRKRDM) are disordered.

Belongs to the DarP family.

The protein localises to the cytoplasm. Member of a network of 50S ribosomal subunit biogenesis factors which assembles along the 30S-50S interface, preventing incorrect 23S rRNA structures from forming. Promotes peptidyl transferase center (PTC) maturation. The chain is Dual-action ribosomal maturation protein DarP from Cupriavidus metallidurans (strain ATCC 43123 / DSM 2839 / NBRC 102507 / CH34) (Ralstonia metallidurans).